Consider the following 416-residue polypeptide: Serine hydroxymethyltransferase 1 (416 aa).

(6S)-5,6,7,8-tetrahydrofolate-binding positions include Leu-121 and 125–127; that span reads GHL. N6-(pyridoxal phosphate)lysine is present on Lys-229. (6S)-5,6,7,8-tetrahydrofolate contacts are provided by residues Glu-245 and 354 to 356; that span reads SPF.

The protein belongs to the SHMT family. In terms of assembly, homodimer. Requires pyridoxal 5'-phosphate as cofactor.

The protein resides in the cytoplasm. The catalysed reaction is (6R)-5,10-methylene-5,6,7,8-tetrahydrofolate + glycine + H2O = (6S)-5,6,7,8-tetrahydrofolate + L-serine. It participates in one-carbon metabolism; tetrahydrofolate interconversion. The protein operates within amino-acid biosynthesis; glycine biosynthesis; glycine from L-serine: step 1/1. In terms of biological role, catalyzes the reversible interconversion of serine and glycine with tetrahydrofolate (THF) serving as the one-carbon carrier. This reaction serves as the major source of one-carbon groups required for the biosynthesis of purines, thymidylate, methionine, and other important biomolecules. Also exhibits THF-independent aldolase activity toward beta-hydroxyamino acids, producing glycine and aldehydes, via a retro-aldol mechanism. The chain is Serine hydroxymethyltransferase 1 from Vibrio vulnificus (strain CMCP6).